Reading from the N-terminus, the 481-residue chain is Ribosomal RNA small subunit methyltransferase F (481 aa).

S-adenosyl-L-methionine contacts are provided by residues 125–131 (AAAPGSK), Glu-149, Asp-176, and Asp-194. Cys-247 acts as the Nucleophile in catalysis.

It belongs to the class I-like SAM-binding methyltransferase superfamily. RsmB/NOP family.

Its subcellular location is the cytoplasm. The enzyme catalyses cytidine(1407) in 16S rRNA + S-adenosyl-L-methionine = 5-methylcytidine(1407) in 16S rRNA + S-adenosyl-L-homocysteine + H(+). Its function is as follows. Specifically methylates the cytosine at position 1407 (m5C1407) of 16S rRNA. The protein is Ribosomal RNA small subunit methyltransferase F of Psychromonas ingrahamii (strain DSM 17664 / CCUG 51855 / 37).